Here is a 373-residue protein sequence, read N- to C-terminus: Alanine dehydrogenase (373 aa).

Substrate is bound by residues Arg15 and Lys75. His96 serves as the catalytic Proton donor/acceptor. NAD(+) contacts are provided by residues Ser134, 178–179, Asp198, Ser220, 239–240, 267–270, Arg280, and 299–302; these read IV, VL, VAID, and VANI. The active-site Proton donor/acceptor is Asp270.

The protein belongs to the AlaDH/PNT family. Homohexamer. Trimer of dimer.

The protein localises to the cytoplasm. The enzyme catalyses L-alanine + NAD(+) + H2O = pyruvate + NH4(+) + NADH + H(+). The protein operates within amino-acid degradation; L-alanine degradation via dehydrogenase pathway; NH(3) and pyruvate from L-alanine: step 1/1. Functionally, catalyzes the reversible reductive amination of pyruvate to L-alanine. This enzyme is a key factor in the assimilation of L-alanine as an energy source through the tricarboxylic acid cycle. In Methanococcus maripaludis (strain DSM 14266 / JCM 13030 / NBRC 101832 / S2 / LL), this protein is Alanine dehydrogenase.